A 159-amino-acid chain; its full sequence is Urease subunit beta 2 (159 aa).

Residues 1–24 (MAKEPTKAAHPQPEQTKTNHKAHR) are disordered.

It belongs to the urease beta subunit family. As to quaternary structure, heterotrimer of UreA (gamma), UreB (beta) and UreC (alpha) subunits. Three heterotrimers associate to form the active enzyme.

The protein resides in the cytoplasm. The catalysed reaction is urea + 2 H2O + H(+) = hydrogencarbonate + 2 NH4(+). Its pathway is nitrogen metabolism; urea degradation; CO(2) and NH(3) from urea (urease route): step 1/1. Its function is as follows. Disrupting the ure2 operon has no effect on urease activity, or pathogen survival in BALB/c mice when inoculated by gavage, but confers slightly enhanced resistance to low pH killing in vitro. This chain is Urease subunit beta 2, found in Brucella suis biovar 1 (strain 1330).